A 378-amino-acid polypeptide reads, in one-letter code: Glutamate 5-kinase (378 aa).

Position 20 (lysine 20) interacts with ATP. Residues serine 60, aspartate 147, and asparagine 159 each coordinate substrate. ATP contacts are provided by residues 179–180 (TD) and 221–227 (TGGMLTK). In terms of domain architecture, PUA spans 286-364 (RGRVVLDDGA…SQIARILGSM (79 aa)).

The protein belongs to the glutamate 5-kinase family.

The protein resides in the cytoplasm. The enzyme catalyses L-glutamate + ATP = L-glutamyl 5-phosphate + ADP. It participates in amino-acid biosynthesis; L-proline biosynthesis; L-glutamate 5-semialdehyde from L-glutamate: step 1/2. Catalyzes the transfer of a phosphate group to glutamate to form L-glutamate 5-phosphate. The sequence is that of Glutamate 5-kinase from Bordetella parapertussis (strain 12822 / ATCC BAA-587 / NCTC 13253).